A 1468-amino-acid chain; its full sequence is DNA-directed RNA polymerase subunit beta (1468 aa).

It belongs to the RNA polymerase beta chain family. The RNAP catalytic core consists of 2 alpha, 1 beta, 1 beta' and 1 omega subunit. When a sigma factor is associated with the core the holoenzyme is formed, which can initiate transcription.

It carries out the reaction RNA(n) + a ribonucleoside 5'-triphosphate = RNA(n+1) + diphosphate. DNA-dependent RNA polymerase catalyzes the transcription of DNA into RNA using the four ribonucleoside triphosphates as substrates. The sequence is that of DNA-directed RNA polymerase subunit beta from Aquifex aeolicus (strain VF5).